Consider the following 778-residue polypeptide: Dolichyl-phosphate-mannose--protein mannosyltransferase 4 (778 aa).

Residues 1–28 (MASKSEKAVKKAQKLSKEPSVELTDTKS) are compositionally biased toward basic and acidic residues. The tract at residues 1-44 (MASKSEKAVKKAQKLSKEPSVELTDTKSSDNVTPKQKSPNSTEE) is disordered. Positions 29-41 (SDNVTPKQKSPNS) are enriched in polar residues. Asn40 carries N-linked (GlcNAc...) asparagine glycosylation. 7 helical membrane-spanning segments follow: residues 60 to 80 (LAFV…LNLP), 103 to 123 (FFDL…KLAG), 145 to 165 (VTIR…VFLI), 196 to 216 (ILLD…YVRF), 223 to 243 (PFSR…SCTI), 248 to 268 (VGFF…WYLW), and 288 to 308 (FCLI…HFNI). N-linked (GlcNAc...) asparagine glycosylation is present at Asn335. MIR domains are found at residues 336 to 396 (STIL…ILPA), 408 to 467 (NVPV…VVMS), and 474 to 529 (RPLY…FDDI). A run of 4 helical transmembrane segments spans residues 608–628 (WWII…EILL), 644–664 (FYRS…PFFI), 669–689 (LFLH…GAFI), and 726–746 (VIEL…FTFF).

Belongs to the glycosyltransferase 39 family.

It is found in the endoplasmic reticulum membrane. The enzyme catalyses a di-trans,poly-cis-dolichyl beta-D-mannosyl phosphate + L-seryl-[protein] = 3-O-(alpha-D-mannosyl)-L-seryl-[protein] + a di-trans,poly-cis-dolichyl phosphate + H(+). It catalyses the reaction a di-trans,poly-cis-dolichyl beta-D-mannosyl phosphate + L-threonyl-[protein] = 3-O-(alpha-D-mannosyl)-L-threonyl-[protein] + a di-trans,poly-cis-dolichyl phosphate + H(+). It functions in the pathway protein modification; protein glycosylation. Transfers mannose from Dol-P-mannose to Ser or Thr residues on proteins. Required for normal cell wall and septum formation. This is Dolichyl-phosphate-mannose--protein mannosyltransferase 4 (ogm4) from Schizosaccharomyces pombe (strain 972 / ATCC 24843) (Fission yeast).